Here is a 542-residue protein sequence, read N- to C-terminus: MGNKIHAGFTFTPSHARSLDCFVCLLVLFSFRSTPPHGRHPAIEPTLLISHYYRGQMLGTYNGDSKAETDGKDNSICHICSDVATGRHYGAIACNGCKGFFRRTVRRNYEYHCRFESKCEIDKHNRAVCRYCRFMKCISSGMRDDQVQSERDVIGKREKKDNMKTYCQDPTPRTSPELTMSPVEDEYDQLLESLLKSEMTIQSLRDTVITQTGNVEYTTKSKNRLSHTDRTATLNDVLKSMHSQLLLVIEWAKTLPEFKQLSGADQAVLLKNFAGQHVTLCVAYRSVGANDALKLLNDLYIPRASKTTPHLKEYVDGFYLRDCEKVMDQLVEPMRFLKLDNKEFVALKACVLFNPVAPGLSNHAVNLVLNARRKIFAAFEKYVRVNKPLETTRVGDLTFFILTPLSVLSKSISEDIMFTKVSGVARIDVLMEELILAETDYGEDRQDQTPCSIMNDTPSGSQDMCSPCPEDLLRTSTSSNSPTNSSLTAGLLLKTDDAMMSGIGTQYTTPQPHTPQFADSSHLNLPYAPFTSSYNQYPNTYS.

The nuclear receptor DNA-binding region spans 74–149 (NSICHICSDV…SGMRDDQVQS (76 aa)). 2 consecutive NR C4-type zinc fingers follow at residues 77–97 (CHICSDVATGRHYGAIACNGC) and 113–137 (CRFESKCEIDKHNRAVCRYCRFMKC). The region spanning 186–438 (EYDQLLESLL…VLMEELILAE (253 aa)) is the NR LBD domain. The interval 445–487 (RQDQTPCSIMNDTPSGSQDMCSPCPEDLLRTSTSSNSPTNSSL) is disordered. Residues 448–464 (QTPCSIMNDTPSGSQDM) are compositionally biased toward polar residues. Residues 475 to 487 (TSTSSNSPTNSSL) show a composition bias toward low complexity.

This sequence belongs to the nuclear hormone receptor family.

The protein resides in the nucleus. Functionally, orphan nuclear receptor. The sequence is that of Nuclear hormone receptor family member nhr-35 (nhr-35) from Caenorhabditis elegans.